We begin with the raw amino-acid sequence, 113 residues long: U11-theraphotoxin-Hhn1o (113 aa).

Positions 1–21 (MNTVRVTFLLVFVLAVSLGQA) are cleaved as a signal peptide. Positions 22-74 (DKDENRMEMQEKTEQGKSYLDFAENLLLQKLEELEAKLLEEDSEESRNSRQKR) are excised as a propeptide. The interval 61-83 (EEDSEESRNSRQKRCIGEGVPCD) is disordered. Intrachain disulfides connect Cys75–Cys90 and Cys82–Cys95.

It belongs to the neurotoxin 14 (magi-1) family. 01 (HNTX-16) subfamily. Expressed by the venom gland.

It localises to the secreted. Its function is as follows. Probable ion channel inhibitor. The polypeptide is U11-theraphotoxin-Hhn1o (Cyriopagopus hainanus (Chinese bird spider)).